A 710-amino-acid chain; its full sequence is Early transcription factor 82 kDa subunit (710 aa).

Belongs to the poxviridae VETF large subunit family. Heterodimer of a 70 kDa and a 82 kDa subunit. Part of the early transcription complex composed of ETF, RAP94/OPG109, and the DNA-directed RNA polymerase.

The protein resides in the virion. Its function is as follows. Acts with RNA polymerase to initiate transcription from early gene promoters. Is recruited by the RPO-associated protein of 94 kDa RAP94/OPG109 to form the early transcription complex, which also contains the core RNA polymerase. ETF heterodimer binds to early gene promoters. The protein is Early transcription factor 82 kDa subunit (OPG133) of Homo sapiens (Human).